A 26-amino-acid polypeptide reads, in one-letter code: Orexigenic neuropeptide 26RFa (26 aa).

A Phenylalanine amide modification is found at F26.

In terms of tissue distribution, brain.

The protein resides in the secreted. Its function is as follows. May have orexigenic activity. May promote aldosterone secretion by the adrenal gland. In Pelophylax lessonae (Pool frog), this protein is Orexigenic neuropeptide 26RFa.